The following is a 209-amino-acid chain: uncharacterized protein (209 aa).

The protein resides in the plastid. It localises to the chloroplast. This is an uncharacterized protein from Porphyra purpurea (Red seaweed).